A 349-amino-acid polypeptide reads, in one-letter code: 4-hydroxythreonine-4-phosphate dehydrogenase (349 aa).

Positions 141 and 142 each coordinate substrate. A divalent metal cation is bound by residues His176, His221, and His276. Substrate contacts are provided by Lys284, Asn293, and Arg302.

It belongs to the PdxA family. In terms of assembly, homodimer. Requires Zn(2+) as cofactor. Mg(2+) is required as a cofactor. It depends on Co(2+) as a cofactor.

The protein resides in the cytoplasm. The enzyme catalyses 4-(phosphooxy)-L-threonine + NAD(+) = 3-amino-2-oxopropyl phosphate + CO2 + NADH. Its pathway is cofactor biosynthesis; pyridoxine 5'-phosphate biosynthesis; pyridoxine 5'-phosphate from D-erythrose 4-phosphate: step 4/5. Catalyzes the NAD(P)-dependent oxidation of 4-(phosphooxy)-L-threonine (HTP) into 2-amino-3-oxo-4-(phosphooxy)butyric acid which spontaneously decarboxylates to form 3-amino-2-oxopropyl phosphate (AHAP). The chain is 4-hydroxythreonine-4-phosphate dehydrogenase from Methylorubrum populi (strain ATCC BAA-705 / NCIMB 13946 / BJ001) (Methylobacterium populi).